Here is a 106-residue protein sequence, read N- to C-terminus: UPF0145 protein APJL_0492 (106 aa).

This sequence belongs to the UPF0145 family.

This chain is UPF0145 protein APJL_0492, found in Actinobacillus pleuropneumoniae serotype 3 (strain JL03).